Consider the following 286-residue polypeptide: Short-chain dehydrogenase fogD (286 aa).

Residues V8, T34, D55, Y147, K151, V180, and T182 each contribute to the NADP(+) site. Y147 (proton acceptor) is an active-site residue. The active-site Lowers pKa of active site Tyr is K151.

This sequence belongs to the short-chain dehydrogenases/reductases (SDR) family.

It functions in the pathway secondary metabolite biosynthesis. Functionally, short-chain dehydrogenase; part of the gene cluster that mediates the biosynthesis of flavoglaucin and congeners (including aspergin, dihydroauroglaucin and auroglaucin), prenylated salicylaldehyde derivatives carrying a saturated or an unsaturated C-7 side chain. The PKS fogA releases the carboxylic acid (8E,10E,12E)-3,5,7-trihydroxytetradeca-8,10,12-trienoic acid as its product, as well as derivatives with one and two double bonds. FogA is indeed able to reduce the initial triketide, thus being at least partially responsible for the differently saturated heptyl side chains of flavoglaucin congeners. The oxidoreductases fogB, fogC and fogD modify the nascent polyketide in fogA-bound form and, together, fogA, fogB, fogC and fogD are necessary for the formation of the aromatic core and the cyclized PKS products are released as salicyl alcohols. In particular, fogB is responsible for oxidation of a hydroxyl group or reduction of remaining double bond(s) at the C-7 residue whereas fogD is probably involved in the reductive release of the modified PKS products. The cytochrome P450 monooxygenase fogE is then responsible for the hydroxylation at C-3 of the benzene ring. The fogE products are substrates of the prenyltransferase fogH and the prenylated benzyl alcohols are subsequently oxidized by the fogF to produce the final aryl aldehydes flavoglaucin and congeners. The short-chain dehydrogenase fogG does not seem to be involved in the biosynthesis of the prenylated salicylaldehyde derivatives. This is Short-chain dehydrogenase fogD from Aspergillus ruber (strain CBS 135680).